Here is a 316-residue protein sequence, read N- to C-terminus: HPr kinase/phosphorylase (316 aa).

Catalysis depends on residues His-143 and Lys-164. 158–165 contacts ATP; the sequence is GEAGSGKS. Ser-165 serves as a coordination point for Mg(2+). The active-site Proton acceptor; for phosphorylation activity. Proton donor; for dephosphorylation activity is the Asp-182. The tract at residues 206–215 is important for the catalytic mechanism of both phosphorylation and dephosphorylation; it reads LEVRGLGVLN. Glu-207 contributes to the Mg(2+) binding site. Arg-251 is a catalytic residue. The segment at 272 to 277 is important for the catalytic mechanism of dephosphorylation; sequence PVMPGR.

This sequence belongs to the HPrK/P family. In terms of assembly, homohexamer. Requires Mg(2+) as cofactor.

It carries out the reaction [HPr protein]-L-serine + ATP = [HPr protein]-O-phospho-L-serine + ADP + H(+). It catalyses the reaction [HPr protein]-O-phospho-L-serine + phosphate + H(+) = [HPr protein]-L-serine + diphosphate. Catalyzes the ATP- as well as the pyrophosphate-dependent phosphorylation of a specific serine residue in HPr, a phosphocarrier protein of the phosphoenolpyruvate-dependent sugar phosphotransferase system (PTS). HprK/P also catalyzes the pyrophosphate-producing, inorganic phosphate-dependent dephosphorylation (phosphorolysis) of seryl-phosphorylated HPr (P-Ser-HPr). This is HPr kinase/phosphorylase from Xanthomonas campestris pv. campestris (strain 8004).